The chain runs to 202 residues: Transmembrane 4 L6 family member 1 (202 aa).

Over 1–9 (MCSSKCTRY) the chain is Cytoplasmic. Residues 10 to 30 (IGHSLVVFAVLCIVANILLYF) traverse the membrane as a helical segment. The Extracellular segment spans residues 31 to 49 (PNGETKYAYEDHLSRFVWF). The chain crosses the membrane as a helical span at residues 50–70 (FAGIVGGGLLILLPAFVFLGL). The Cytoplasmic segment spans residues 71 to 93 (EGEDCCGCWSCENYGKRCTMLSS). A helical transmembrane segment spans residues 94–114 (IMAALIGIAGSGYCVIVAALG). The Extracellular portion of the chain corresponds to 115–161 (LAEGPKCGDSHGMWNYTFANTDGQYLLDPTTWSKCHEPNNIVEWNVT). Residues Asn129 and Asn159 are each glycosylated (N-linked (GlcNAc...) asparagine). A helical membrane pass occupies residues 162 to 182 (LFSILLALGGLEFILCLIQVI). Residues 183-202 (NGVLEGMCSYCCSHQQQYDC) lie on the Cytoplasmic side of the membrane.

It belongs to the L6 tetraspanin family. In terms of assembly, present in high molecular weight complexes in tumor cells. Interacts with SDCBP2.

It localises to the membrane. The sequence is that of Transmembrane 4 L6 family member 1 (TM4SF1) from Mesocricetus auratus (Golden hamster).